Reading from the N-terminus, the 367-residue chain is Peptide chain release factor 2 (367 aa).

Gln251 carries the post-translational modification N5-methylglutamine.

It belongs to the prokaryotic/mitochondrial release factor family. Post-translationally, methylated by PrmC. Methylation increases the termination efficiency of RF2.

It is found in the cytoplasm. Peptide chain release factor 2 directs the termination of translation in response to the peptide chain termination codons UGA and UAA. In Nautilia profundicola (strain ATCC BAA-1463 / DSM 18972 / AmH), this protein is Peptide chain release factor 2.